A 406-amino-acid chain; its full sequence is Tyrosine--tRNA ligase (406 aa).

Tyrosine 39 contacts L-tyrosine. Residues 44 to 53 (PTADSLHVGH) carry the 'HIGH' region motif. 2 residues coordinate L-tyrosine: tyrosine 172 and glutamine 176. The short motif at 232–236 (KMGKT) is the 'KMSKS' region element. ATP is bound at residue lysine 235. Residues 344–404 (KELLDVLVDR…LGKKKFYNIV (61 aa)) enclose the S4 RNA-binding domain.

The protein belongs to the class-I aminoacyl-tRNA synthetase family. TyrS type 1 subfamily. Homodimer.

The protein localises to the cytoplasm. The enzyme catalyses tRNA(Tyr) + L-tyrosine + ATP = L-tyrosyl-tRNA(Tyr) + AMP + diphosphate + H(+). Functionally, catalyzes the attachment of tyrosine to tRNA(Tyr) in a two-step reaction: tyrosine is first activated by ATP to form Tyr-AMP and then transferred to the acceptor end of tRNA(Tyr). The protein is Tyrosine--tRNA ligase of Fusobacterium nucleatum subsp. nucleatum (strain ATCC 25586 / DSM 15643 / BCRC 10681 / CIP 101130 / JCM 8532 / KCTC 2640 / LMG 13131 / VPI 4355).